A 571-amino-acid chain; its full sequence is Proline--tRNA ligase (571 aa).

This sequence belongs to the class-II aminoacyl-tRNA synthetase family. ProS type 1 subfamily. As to quaternary structure, homodimer.

Its subcellular location is the cytoplasm. The enzyme catalyses tRNA(Pro) + L-proline + ATP = L-prolyl-tRNA(Pro) + AMP + diphosphate. Catalyzes the attachment of proline to tRNA(Pro) in a two-step reaction: proline is first activated by ATP to form Pro-AMP and then transferred to the acceptor end of tRNA(Pro). As ProRS can inadvertently accommodate and process non-cognate amino acids such as alanine and cysteine, to avoid such errors it has two additional distinct editing activities against alanine. One activity is designated as 'pretransfer' editing and involves the tRNA(Pro)-independent hydrolysis of activated Ala-AMP. The other activity is designated 'posttransfer' editing and involves deacylation of mischarged Ala-tRNA(Pro). The misacylated Cys-tRNA(Pro) is not edited by ProRS. The protein is Proline--tRNA ligase of Acinetobacter baumannii (strain ATCC 17978 / DSM 105126 / CIP 53.77 / LMG 1025 / NCDC KC755 / 5377).